The sequence spans 57 residues: MKYFVVLVVLALILAITVGPSDAVFIDILDKMENAIHKAAQAGIGIAKPIEKMILPK.

Positions 1–23 (MKYFVVLVVLALILAITVGPSDA) are cleaved as a signal peptide.

The protein belongs to the andropin family. Ejaculatory duct of adult males.

It is found in the secreted. Functionally, male-specific peptide with moderate activity against Gram-positive bacteria. The chain is Andropin (Anp) from Drosophila mauritiana (Fruit fly).